Consider the following 286-residue polypeptide: 4-hydroxybenzoate octaprenyltransferase (286 aa).

7 helical membrane passes run 20-40 (IGTL…AGGM), 43-63 (LKVL…GCII), 95-115 (ILFA…NPLV), 142-162 (FLGV…TGEV), 167-187 (WWLF…YAMV), 210-230 (QIIG…GWAA), and 234-254 (LVYG…QKLI).

This sequence belongs to the UbiA prenyltransferase family. It depends on Mg(2+) as a cofactor.

It is found in the cell inner membrane. It catalyses the reaction all-trans-octaprenyl diphosphate + 4-hydroxybenzoate = 4-hydroxy-3-(all-trans-octaprenyl)benzoate + diphosphate. Its pathway is cofactor biosynthesis; ubiquinone biosynthesis. Its function is as follows. Catalyzes the prenylation of para-hydroxybenzoate (PHB) with an all-trans polyprenyl group. Mediates the second step in the final reaction sequence of ubiquinone-8 (UQ-8) biosynthesis, which is the condensation of the polyisoprenoid side chain with PHB, generating the first membrane-bound Q intermediate 3-octaprenyl-4-hydroxybenzoate. The chain is 4-hydroxybenzoate octaprenyltransferase from Shewanella sediminis (strain HAW-EB3).